We begin with the raw amino-acid sequence, 848 residues long: DNA mismatch repair protein MutS (848 aa).

610–617 contributes to the ATP binding site; sequence GPNMGGKS.

Belongs to the DNA mismatch repair MutS family.

This protein is involved in the repair of mismatches in DNA. It is possible that it carries out the mismatch recognition step. This protein has a weak ATPase activity. The protein is DNA mismatch repair protein MutS of Francisella philomiragia subsp. philomiragia (strain ATCC 25017 / CCUG 19701 / FSC 153 / O#319-036).